We begin with the raw amino-acid sequence, 170 residues long: UPF0260 protein RPB_3505 (170 aa).

This sequence belongs to the UPF0260 family.

The sequence is that of UPF0260 protein RPB_3505 from Rhodopseudomonas palustris (strain HaA2).